A 360-amino-acid polypeptide reads, in one-letter code: Phosphate acyltransferase (360 aa).

The span at 296–305 (STLRREHLDR) shows a compositional bias: basic and acidic residues. A disordered region spans residues 296–360 (STLRREHLDR…LRTAEPPGSL (65 aa)). Over residues 314–333 (PRQRRRPRRQKRRAACRPRP) the composition is skewed to basic residues. Residues 334-350 (RSAAGRAPGSGVRGAAG) are compositionally biased toward low complexity.

The protein belongs to the PlsX family. Homodimer. Probably interacts with PlsY.

The protein resides in the cytoplasm. The catalysed reaction is a fatty acyl-[ACP] + phosphate = an acyl phosphate + holo-[ACP]. The protein operates within lipid metabolism; phospholipid metabolism. In terms of biological role, catalyzes the reversible formation of acyl-phosphate (acyl-PO(4)) from acyl-[acyl-carrier-protein] (acyl-ACP). This enzyme utilizes acyl-ACP as fatty acyl donor, but not acyl-CoA. This chain is Phosphate acyltransferase, found in Deinococcus radiodurans (strain ATCC 13939 / DSM 20539 / JCM 16871 / CCUG 27074 / LMG 4051 / NBRC 15346 / NCIMB 9279 / VKM B-1422 / R1).